The chain runs to 580 residues: 2-isopropylmalate synthase (580 aa).

The span at 1-11 shows a compositional bias: polar residues; the sequence is MSATAFPTLST. Positions 1–37 are disordered; it reads MSATAFPTLSTPAGEIPATAPAWNRQRRSQMPSHRYR. Residues 61-334 enclose the Pyruvate carboxyltransferase domain; the sequence is PLWVPVDLRD…DPMIDFSDID (274 aa). The Mg(2+) site is built by aspartate 70, histidine 273, histidine 275, and asparagine 309. Residues 476–580 form a regulatory domain region; it reads EGEADAPQAD…ARAVAEVRPG (105 aa).

The protein belongs to the alpha-IPM synthase/homocitrate synthase family. LeuA type 2 subfamily. In terms of assembly, homodimer. It depends on Mg(2+) as a cofactor.

It is found in the cytoplasm. The catalysed reaction is 3-methyl-2-oxobutanoate + acetyl-CoA + H2O = (2S)-2-isopropylmalate + CoA + H(+). The protein operates within amino-acid biosynthesis; L-leucine biosynthesis; L-leucine from 3-methyl-2-oxobutanoate: step 1/4. Its function is as follows. Catalyzes the condensation of the acetyl group of acetyl-CoA with 3-methyl-2-oxobutanoate (2-ketoisovalerate) to form 3-carboxy-3-hydroxy-4-methylpentanoate (2-isopropylmalate). This chain is 2-isopropylmalate synthase, found in Nocardia farcinica (strain IFM 10152).